The following is a 179-amino-acid chain: DELTA-actitoxin-Afr1e (179 aa).

An N-terminal alpha-helix that contributes to the pore region spans residues 1-29 (SADVAGAVIDGAGLGFDVLKTVLEALGNV). Positions 11–30 (GAGLGFDVLKTVLEALGNVK) are N-terminal region. Arginine 31 lines the an N-(acyl)-sphingosylphosphocholine pocket. N-acetyl-D-glucosamine 6-sulfate contacts are provided by tyrosine 51 and arginine 53. 13 residues coordinate an N-(acyl)-sphingosylphosphocholine: arginine 53, serine 54, arginine 79, glycine 85, tyrosine 108, tyrosine 113, serine 114, tryptophan 116, tyrosine 133, tyrosine 137, tyrosine 138, arginine 144, and glycine 168. The segment at 105–120 (SVPYDYNWYSNWWNVR) is trp-rich region, which is important for the binding to lipid membrane. Tyrosine 138 serves as a coordination point for N-acetyl-D-glucosamine 6-sulfate. The Cell attachment site, crucial for protein stability motif lies at 144–146 (RGD).

This sequence belongs to the actinoporin family. Sea anemone subfamily. As to quaternary structure, octamer or nonamer in membranes. Monomer in the soluble state.

Its subcellular location is the secreted. The protein localises to the nematocyst. It localises to the target cell membrane. Its function is as follows. Pore-forming toxin (PFT) that consists of a crown-shaped octamer or nonamer that forms cation-selective hydrophilic pores of about 1.5 nm (inside) and 13 nm (outside) and causes cytolysis. It causes cardiac stimulation. Also causes hemolysis (HC(50)=1.6 nM). Interestingly, the Phe-16 is crucial for hemolysis. Pore formation is a multi-step process that involves specific recognition of membrane sphingomyelin (but neither cholesterol nor phosphatidylcholine) using aromatic rich region and adjacent phosphocholine (POC) binding site, firm binding to the membrane (mainly driven by hydrophobic interactions) accompanied by the transfer of the N-terminal region to the lipid-water interface and finally pore formation after oligomerization of monomers. It is probable that a dimeric form is an assembly intermediate before the complete oligomerization. The formation of stable pores occurs only in vesicles composed of DOPC/SM (there is no oligomerization when the PFT is treated with vesicles of DOPC or SM alone). The transmembrane pore displays 8 lateral perforations, one at each subunit-subunit interface, partially occupied by the acyl-chain region of a bridging lipid. Each pore contains 24 lipid molecules, firmly bound to each subunit, that is, 3 lipids (L1, L2, L3, L4 and/or L5) are associated to each subunit. Lipid L1 bridges 2 subunits, whereas lipids L2 and L3 bind to sites at single subunit. The polypeptide is DELTA-actitoxin-Afr1e (Actinia fragacea (Strawberry anemone)).